A 305-amino-acid polypeptide reads, in one-letter code: GMP synthase [glutamine-hydrolyzing] subunit B (305 aa).

A GMPS ATP-PPase domain is found at 2-185; that stretch reads VDVDSFVEDA…LGLEEIISER (184 aa). An ATP-binding site is contributed by 29–35; that stretch reads SGGVDSS.

In terms of assembly, heterodimer composed of a glutamine amidotransferase subunit (A) and a GMP-binding subunit (B).

The catalysed reaction is XMP + L-glutamine + ATP + H2O = GMP + L-glutamate + AMP + diphosphate + 2 H(+). It participates in purine metabolism; GMP biosynthesis; GMP from XMP (L-Gln route): step 1/1. Its function is as follows. Catalyzes the synthesis of GMP from XMP. The polypeptide is GMP synthase [glutamine-hydrolyzing] subunit B (Halobacterium salinarum (strain ATCC 29341 / DSM 671 / R1)).